The chain runs to 152 residues: Superoxide dismutase [Cu-Zn] 1 (152 aa).

Cu cation is bound by residues histidine 45, histidine 47, and histidine 62. Residues cysteine 56 and cysteine 145 are joined by a disulfide bond. 4 residues coordinate Zn(2+): histidine 62, histidine 70, histidine 79, and aspartate 82. Cu cation is bound at residue histidine 119.

This sequence belongs to the Cu-Zn superoxide dismutase family. Homodimer. Cu cation is required as a cofactor. Requires Zn(2+) as cofactor.

It localises to the cytoplasm. It catalyses the reaction 2 superoxide + 2 H(+) = H2O2 + O2. Destroys radicals which are normally produced within the cells and which are toxic to biological systems. The protein is Superoxide dismutase [Cu-Zn] 1 (SODCC.1) of Solanum lycopersicum (Tomato).